Reading from the N-terminus, the 572-residue chain is uncharacterized protein (572 aa).

A disordered region spans residues 13-45 (ALIAKPKGKTVSGDGADPKKRGRPKKNATEPAV). The stretch at 177-204 (VLTKEMEEKLEALDRDMRTAEETKVSIA) forms a coiled coil.

This is an uncharacterized protein from Dryophytes versicolor (chameleon treefrog).